The chain runs to 523 residues: Protein tweety homolog 3 (523 aa).

Topologically, residues 1–42 (MAGVSYAAPWWVSLLHRLPHFDLSWEATSSQFRPEDTDYQQA) are extracellular. The chain crosses the membrane as a helical span at residues 43–63 (LLLLGAAALACLALDLLFLLF). Over 64 to 86 (YSFWLCCRRRKSEEHLDADCCCT) the chain is Cytoplasmic. The chain crosses the membrane as a helical span at residues 87-107 (AWCVIIATLVCSAGIAVGFYG). The Extracellular segment spans residues 108–211 (NGETSDGIHR…VDLYDWYRWL (104 aa)). Glu110 and Asp113 together coordinate Ca(2+). Asn126 and Asn144 each carry an N-linked (GlcNAc...) asparagine glycan. A helical transmembrane segment spans residues 212 to 232 (GYLGLLLLDVIICLLVLVGLI). Topologically, residues 233–236 (RSSK) are cytoplasmic. Residues 237-257 (GILVGVCLLGVLALVISWGAL) form a helical membrane-spanning segment. Residues 258-386 (GLELAVSVGS…LTGFCYDGVE (129 aa)) are Extracellular-facing. 2 disulfide bridges follow: Cys271/Cys381 and Cys299/Cys366. Residue Asn351 is glycosylated (N-linked (GlcNAc...) asparagine). Residues 387-407 (GLIYLALFSFVTALMFSSIVC) traverse the membrane as a helical segment. Residues 408 to 523 (SVPHTWQQKR…QPRPDSSGSH (116 aa)) are Cytoplasmic-facing. Disordered stretches follow at residues 413–435 (WQQK…RQAH) and 482–523 (QNPR…SGSH). A Phosphoserine modification is found at Ser496. A PY-motif; mediates interaction with NEDD4L motif is present at residues 498-501 (PPSY). Polar residues predominate over residues 501 to 523 (YTSSMRAKYLATSQPRPDSSGSH). Phosphoserine is present on residues Ser504 and Ser522.

The protein belongs to the tweety family. Homotetramer; disulfide-linked. Homodimer. Interacts with NEDD4L. In terms of processing, ubiquitinated by NEDD4L. N-Glycosylated. Contains high-mannose, hybrid and complex oligosaccharides. In terms of tissue distribution, expressed in excitable tissues. Expressed in the brain, heart, skeletal muscle, colon, spleen, kidney and peripheral blood leukocytes.

The protein resides in the cell membrane. It carries out the reaction chloride(in) = chloride(out). The catalysed reaction is L-glutamate(out) = L-glutamate(in). Functionally, calcium-independent, swelling-dependent volume-regulated anion channel (VRAC-swell) which plays a pivotal role in the process of regulatory volume decrease (RVD) in the brain through the efflux of anions like chloride and organic osmolytes like glutamate. Probable large-conductance Ca(2+)-activated chloride channel. This Homo sapiens (Human) protein is Protein tweety homolog 3 (TTYH3).